The following is a 396-amino-acid chain: Elongation factor Tu (396 aa).

The region spanning 10–206 (KPHCNIGTIG…TVDAYIPQPE (197 aa)) is the tr-type G domain. Positions 19–26 (GHVDHGKT) are G1. 19–26 (GHVDHGKT) contributes to the GTP binding site. Mg(2+) is bound at residue T26. The G2 stretch occupies residues 60–64 (GITIS). The tract at residues 81 to 84 (DCPG) is G3. Residues 81–85 (DCPGH) and 136–139 (NKVD) each bind GTP. A G4 region spans residues 136–139 (NKVD). The G5 stretch occupies residues 174–176 (SAL).

The protein belongs to the TRAFAC class translation factor GTPase superfamily. Classic translation factor GTPase family. EF-Tu/EF-1A subfamily. Monomer.

Its subcellular location is the cytoplasm. The catalysed reaction is GTP + H2O = GDP + phosphate + H(+). In terms of biological role, GTP hydrolase that promotes the GTP-dependent binding of aminoacyl-tRNA to the A-site of ribosomes during protein biosynthesis. The chain is Elongation factor Tu from Methylocella silvestris (strain DSM 15510 / CIP 108128 / LMG 27833 / NCIMB 13906 / BL2).